The chain runs to 189 residues: Phosphoheptose isomerase (189 aa).

Positions 33–189 (CTDTLKAGNK…ELVEREIYGG (157 aa)) constitute an SIS domain. 48–50 (NGG) serves as a coordination point for substrate. Zn(2+) is bound by residues His-57 and Glu-61. Residues Glu-61, 90–91 (ND), 116–118 (STS), Ser-121, and Gln-168 each bind substrate. Residues Gln-168 and His-176 each coordinate Zn(2+).

Belongs to the SIS family. GmhA subfamily. Zn(2+) is required as a cofactor.

It is found in the cytoplasm. It carries out the reaction 2 D-sedoheptulose 7-phosphate = D-glycero-alpha-D-manno-heptose 7-phosphate + D-glycero-beta-D-manno-heptose 7-phosphate. Its pathway is carbohydrate biosynthesis; D-glycero-D-manno-heptose 7-phosphate biosynthesis; D-glycero-alpha-D-manno-heptose 7-phosphate and D-glycero-beta-D-manno-heptose 7-phosphate from sedoheptulose 7-phosphate: step 1/1. Functionally, catalyzes the isomerization of sedoheptulose 7-phosphate in D-glycero-D-manno-heptose 7-phosphate. The sequence is that of Phosphoheptose isomerase from Akkermansia muciniphila (strain ATCC BAA-835 / DSM 22959 / JCM 33894 / BCRC 81048 / CCUG 64013 / CIP 107961 / Muc).